A 127-amino-acid polypeptide reads, in one-letter code: Aspartate 1-decarboxylase (127 aa).

The Schiff-base intermediate with substrate; via pyruvic acid role is filled by S25. Residue S25 is modified to Pyruvic acid (Ser). T57 lines the substrate pocket. Residue Y58 is the Proton donor of the active site. 73–75 contributes to the substrate binding site; that stretch reads GAA.

This sequence belongs to the PanD family. As to quaternary structure, heterooctamer of four alpha and four beta subunits. It depends on pyruvate as a cofactor. Is synthesized initially as an inactive proenzyme, which is activated by self-cleavage at a specific serine bond to produce a beta-subunit with a hydroxyl group at its C-terminus and an alpha-subunit with a pyruvoyl group at its N-terminus.

The protein resides in the cytoplasm. It catalyses the reaction L-aspartate + H(+) = beta-alanine + CO2. It functions in the pathway cofactor biosynthesis; (R)-pantothenate biosynthesis; beta-alanine from L-aspartate: step 1/1. Catalyzes the pyruvoyl-dependent decarboxylation of aspartate to produce beta-alanine. The polypeptide is Aspartate 1-decarboxylase (Clostridium kluyveri (strain NBRC 12016)).